The primary structure comprises 630 residues: Pro-interleukin-16 (630 aa).

2 disordered regions span residues 30–268 (ENPG…FPLT) and 316–343 (PKEG…ASDT). Residues 129–143 (IRASSSSSIKQRISS) are compositionally biased toward low complexity. At serine 220 the chain carries Phosphoserine. The span at 321–343 (SPTSSSNEDSAANGSAETSASDT) shows a compositional bias: polar residues. Residues 404 to 500 (KQLDSIHVTI…IVTRKLTAES (97 aa)) are interaction with PPP1R12A, PPP1R12B and PPP1R12C. PDZ domains follow at residues 410–495 (HVTI…VTRK) and 532–617 (TVTL…IRRK).

Homotetramer. Pro-interleukin-16 interacts (via PDZ 2 domain) with PPP1R12A, PPP1R12B and PPP1R12C. Pro-interleukin-16 interacts with GRIN2A. Pro-interleukin-16 interacts with GABPB1. Pro-interleukin-16 interacts (via PDZ 3 domain) with HDAC3.

It is found in the secreted. The protein localises to the cytoplasm. Its subcellular location is the nucleus. Functionally, interleukin-16 stimulates a migratory response in CD4+ lymphocytes, monocytes, and eosinophils. Primes CD4+ T-cells for IL-2 and IL-15 responsiveness. Also induces T-lymphocyte expression of interleukin 2 receptor. Ligand for CD4. Its function is as follows. Pro-interleukin-16 is involved in cell cycle progression in T-cells. Appears to be involved in transcriptional regulation of SKP2 and is probably part of a transcriptional repression complex on the core promoter of the SKP2 gene. May act as a scaffold for GABPB1 (the DNA-binding subunit the GABP transcription factor complex) and HDAC3 thus maintaining transcriptional repression and blocking cell cycle progression in resting T-cells. In Macaca mulatta (Rhesus macaque), this protein is Pro-interleukin-16 (IL16).